The primary structure comprises 325 residues: Metacaspase-9 (325 aa).

Active-site residues include H95 and C147. At C147 the chain carries S-nitrosocysteine. An N-linked (GlcNAc...) asparagine glycan is attached at N177.

Belongs to the peptidase C14B family. Post-translationally, the two subunits are derived from the precursor sequence by an autocatalytic mechanism. S-nitrosylation at Cys-147 suppresses both autoprocessing and proteolytic activity of the full-length protein, but does not affect the activity of the mature processed form. In terms of tissue distribution, expressed in root tips, cauline leaves, flowers and siliques.

Its subcellular location is the secreted. The protein localises to the extracellular space. It is found in the apoplast. Inhibited by serpin ZX and nitric oxide through cysteine nitrosylation. Cysteine protease that cleaves specifically after arginine or lysine residues. Does not cleave caspase-specific substrates. Required for proteolytic processing of GRI. This chain is Metacaspase-9 (AMC9), found in Arabidopsis thaliana (Mouse-ear cress).